The following is a 98-amino-acid chain: MNPSEVASAGIHPIELCVHSILSSNLEGIYQAITELRESQALLVMKFNQVKKSFMDEQELLQEEGSLKEELARVNQLKKRLDKLTELYAELARKCGAL.

Residues 55-98 (MDEQELLQEEGSLKEELARVNQLKKRLDKLTELYAELARKCGAL) are a coiled coil.

The protein belongs to the SNAPIN family. In terms of assembly, component of the biogenesis of lysosome-related organelles complex-1 (BLOC-1).

The protein resides in the endosome. Its function is as follows. Component of the biogenesis of lysosome-related organelles complex-1 (BLOC-1), a complex involved in endosomal cargo sorting. This Eremothecium gossypii (strain ATCC 10895 / CBS 109.51 / FGSC 9923 / NRRL Y-1056) (Yeast) protein is Biogenesis of lysosome-related organelles complex 1 subunit SNN1 (SNN1).